The following is a 493-amino-acid chain: Cardiolipin synthase 1 (493 aa).

2 helical membrane passes run 13–33 and 45–65; these read FTIILAIGFIINLVLAFIIIF and WAWLFVLFVLPLIGFILYLFF. 2 consecutive PLD phosphodiesterase domains span residues 228–255 and 406–433; these read MNNRNHRKIIVIDGQLGYVGGFNIGDEY and ENGFIHSKMCLIDDEIVSVGTANMDFRS. Catalysis depends on residues His233, Lys235, Asp240, His411, Lys413, and Asp418.

Belongs to the phospholipase D family. Cardiolipin synthase subfamily.

The protein localises to the cell membrane. The enzyme catalyses 2 a 1,2-diacyl-sn-glycero-3-phospho-(1'-sn-glycerol) = a cardiolipin + glycerol. In terms of biological role, catalyzes the reversible phosphatidyl group transfer from one phosphatidylglycerol molecule to another to form cardiolipin (CL) (diphosphatidylglycerol) and glycerol. This chain is Cardiolipin synthase 1 (cls1), found in Staphylococcus aureus (strain COL).